The chain runs to 87 residues: Small ribosomal subunit protein bS20 (87 aa).

The tract at residues 1–26 (MANTAQAKKRVRQNIKQRERNSGLRS) is disordered.

The protein belongs to the bacterial ribosomal protein bS20 family.

In terms of biological role, binds directly to 16S ribosomal RNA. The protein is Small ribosomal subunit protein bS20 of Nitrosomonas eutropha (strain DSM 101675 / C91 / Nm57).